A 303-amino-acid polypeptide reads, in one-letter code: Acetyl-coenzyme A carboxylase carboxyl transferase subunit beta (303 aa).

Positions 25–294 constitute a CoA carboxyltransferase N-terminal domain; the sequence is LWIKCPETGE…NDVSAKSLNG (270 aa).

It belongs to the AccD/PCCB family. In terms of assembly, acetyl-CoA carboxylase is a heterohexamer composed of biotin carboxyl carrier protein (AccB), biotin carboxylase (AccC) and two subunits each of ACCase subunit alpha (AccA) and ACCase subunit beta (AccD).

It localises to the cytoplasm. It catalyses the reaction N(6)-carboxybiotinyl-L-lysyl-[protein] + acetyl-CoA = N(6)-biotinyl-L-lysyl-[protein] + malonyl-CoA. The protein operates within lipid metabolism; malonyl-CoA biosynthesis; malonyl-CoA from acetyl-CoA: step 1/1. Functionally, component of the acetyl coenzyme A carboxylase (ACC) complex. Biotin carboxylase (BC) catalyzes the carboxylation of biotin on its carrier protein (BCCP) and then the CO(2) group is transferred by the transcarboxylase to acetyl-CoA to form malonyl-CoA. The chain is Acetyl-coenzyme A carboxylase carboxyl transferase subunit beta from Rhizobium rhizogenes (strain K84 / ATCC BAA-868) (Agrobacterium radiobacter).